Consider the following 306-residue polypeptide: Pantothenate kinase (306 aa).

Gly-90–Ser-97 lines the ATP pocket.

It belongs to the prokaryotic pantothenate kinase family.

It is found in the cytoplasm. The enzyme catalyses (R)-pantothenate + ATP = (R)-4'-phosphopantothenate + ADP + H(+). It participates in cofactor biosynthesis; coenzyme A biosynthesis; CoA from (R)-pantothenate: step 1/5. This is Pantothenate kinase from Ligilactobacillus salivarius (strain UCC118) (Lactobacillus salivarius).